Reading from the N-terminus, the 201-residue chain is Orotate phosphoribosyltransferase (201 aa).

Residue 113–121 (EDIITTGKS) participates in 5-phospho-alpha-D-ribose 1-diphosphate binding. Orotate contacts are provided by threonine 117 and arginine 145.

It belongs to the purine/pyrimidine phosphoribosyltransferase family. PyrE subfamily. As to quaternary structure, homodimer. It depends on Mg(2+) as a cofactor.

It carries out the reaction orotidine 5'-phosphate + diphosphate = orotate + 5-phospho-alpha-D-ribose 1-diphosphate. Its pathway is pyrimidine metabolism; UMP biosynthesis via de novo pathway; UMP from orotate: step 1/2. In terms of biological role, catalyzes the transfer of a ribosyl phosphate group from 5-phosphoribose 1-diphosphate to orotate, leading to the formation of orotidine monophosphate (OMP). This Helicobacter pylori (strain Shi470) protein is Orotate phosphoribosyltransferase.